Here is a 428-residue protein sequence, read N- to C-terminus: Arabinosyltransferase RRA2 (428 aa).

The Cytoplasmic segment spans residues 1-15 (MAGRRDRIQQLRGSR). A helical; Signal-anchor for type II membrane protein transmembrane segment spans residues 16 to 36 (IAIAIFVGILIGCVCSVLFPN). Over 37–428 (GFFNSGSSLI…ALDSFPDGSD (392 aa)) the chain is Lumenal. A DXD motif motif is present at residues 250-252 (DVD). Residue Asn278 is glycosylated (N-linked (GlcNAc...) asparagine).

The protein belongs to the glycosyltransferase 77 family. As to expression, expressed in roots, rosette and cauline leaves, stems, flowers and siliques.

The protein resides in the golgi apparatus membrane. Plays a role in the arabinosylation of cell wall components. Involved in the arabinosylation of extensin proteins in root hair cells. Extensins are structural glycoproteins present in cell walls and its arabinosylation is important for root hair cell development. The sequence is that of Arabinosyltransferase RRA2 from Arabidopsis thaliana (Mouse-ear cress).